We begin with the raw amino-acid sequence, 424 residues long: Histidine--tRNA ligase (424 aa).

Belongs to the class-II aminoacyl-tRNA synthetase family. Homodimer.

The protein resides in the cytoplasm. It catalyses the reaction tRNA(His) + L-histidine + ATP = L-histidyl-tRNA(His) + AMP + diphosphate + H(+). This Protochlamydia amoebophila (strain UWE25) protein is Histidine--tRNA ligase.